Reading from the N-terminus, the 316-residue chain is Ribosomal protein L11 methyltransferase (316 aa).

The S-adenosyl-L-methionine site is built by threonine 163, glycine 184, aspartate 206, and asparagine 249.

This sequence belongs to the methyltransferase superfamily. PrmA family.

It is found in the cytoplasm. The enzyme catalyses L-lysyl-[protein] + 3 S-adenosyl-L-methionine = N(6),N(6),N(6)-trimethyl-L-lysyl-[protein] + 3 S-adenosyl-L-homocysteine + 3 H(+). Functionally, methylates ribosomal protein L11. This Pediococcus pentosaceus (strain ATCC 25745 / CCUG 21536 / LMG 10740 / 183-1w) protein is Ribosomal protein L11 methyltransferase.